Reading from the N-terminus, the 180-residue chain is Non-structural protein 4 (180 aa).

The next 2 helical transmembrane spans lie at 16–36 (VCVHKMTLLIILIISAAVTVI) and 52–72 (IVSTITDGINATIISVMAILG).

The protein resides in the host membrane. This chain is Non-structural protein 4 (Segment-11), found in Banna virus (BAV).